A 113-amino-acid polypeptide reads, in one-letter code: Large ribosomal subunit protein uL22 (113 aa).

This sequence belongs to the universal ribosomal protein uL22 family. Part of the 50S ribosomal subunit.

This protein binds specifically to 23S rRNA; its binding is stimulated by other ribosomal proteins, e.g. L4, L17, and L20. It is important during the early stages of 50S assembly. It makes multiple contacts with different domains of the 23S rRNA in the assembled 50S subunit and ribosome. Functionally, the globular domain of the protein is located near the polypeptide exit tunnel on the outside of the subunit, while an extended beta-hairpin is found that lines the wall of the exit tunnel in the center of the 70S ribosome. The chain is Large ribosomal subunit protein uL22 from Mycoplasmopsis synoviae (strain 53) (Mycoplasma synoviae).